We begin with the raw amino-acid sequence, 92 residues long: Probable glutathione transferase (92 aa).

The 71-residue stretch at 1–71 (RTCPYAQRAR…YLEEAFPDPP (71 aa)) folds into the GST N-terminal domain. Cysteine 3 functions as the Nucleophile in the catalytic mechanism. Glutathione contacts are provided by residues lysine 30, valine 43, and 55–56 (ES).

The protein belongs to the GST superfamily. Omega family.

The enzyme catalyses RX + glutathione = an S-substituted glutathione + a halide anion + H(+). The catalysed reaction is L-dehydroascorbate + 2 glutathione = glutathione disulfide + L-ascorbate. It carries out the reaction methylarsonate + 2 glutathione + H(+) = methylarsonous acid + glutathione disulfide + H2O. In terms of biological role, exhibits glutathione-dependent thiol transferase activity. Has dehydroascorbate reductase activity and may contribute to the recycling of ascorbic acid. Participates in the biotransformation of inorganic arsenic and reduces monomethylarsonic acid (MMA). The sequence is that of Probable glutathione transferase from Aplysia californica (California sea hare).